The following is a 136-amino-acid chain: Large ribosomal subunit protein uL16c (136 aa).

The protein belongs to the universal ribosomal protein uL16 family. As to quaternary structure, part of the 50S ribosomal subunit.

It localises to the plastid. The protein localises to the chloroplast. This is Large ribosomal subunit protein uL16c from Oryza sativa (Rice).